The sequence spans 282 residues: Pantothenate synthetase (282 aa).

30-37 (MGYLHEGH) lines the ATP pocket. His37 functions as the Proton donor in the catalytic mechanism. Position 61 (Gln61) interacts with (R)-pantoate. Beta-alanine is bound at residue Gln61. An ATP-binding site is contributed by 147–150 (GQKD). (R)-pantoate is bound at residue Gln153. ATP-binding positions include Val176 and 184 to 187 (MSSR).

Belongs to the pantothenate synthetase family. As to quaternary structure, homodimer.

The protein resides in the cytoplasm. The enzyme catalyses (R)-pantoate + beta-alanine + ATP = (R)-pantothenate + AMP + diphosphate + H(+). The protein operates within cofactor biosynthesis; (R)-pantothenate biosynthesis; (R)-pantothenate from (R)-pantoate and beta-alanine: step 1/1. Its function is as follows. Catalyzes the condensation of pantoate with beta-alanine in an ATP-dependent reaction via a pantoyl-adenylate intermediate. This chain is Pantothenate synthetase, found in Pelotomaculum thermopropionicum (strain DSM 13744 / JCM 10971 / SI).